A 259-amino-acid polypeptide reads, in one-letter code: MPRYKLTVEYDGTPYVGWQRQDNGPSVQGALEAAVLGLTGETVAIRGAGRTDSGVHASGQVAHVDLLRQWIPYKLRNALNAHLAQAGQAISILAAEAVPDAFDARFSALKRHYLYRIMSRPSRLALEANRAWWVSKPLDHEAMHAAAQMLVGNHDFTTFRSVHCQAISPVRTLDRLDVSRNGDLIEIRASAQSFLHNQIRSFAGTLKMAGEGKMTPEDVRAALEARDRKACGPVAPPQGLYFLQVDYPTDGNWRPYSKT.

D52 functions as the Nucleophile in the catalytic mechanism. Y113 lines the substrate pocket.

The protein belongs to the tRNA pseudouridine synthase TruA family. Homodimer.

The catalysed reaction is uridine(38/39/40) in tRNA = pseudouridine(38/39/40) in tRNA. In terms of biological role, formation of pseudouridine at positions 38, 39 and 40 in the anticodon stem and loop of transfer RNAs. This chain is tRNA pseudouridine synthase A, found in Allorhizobium ampelinum (strain ATCC BAA-846 / DSM 112012 / S4) (Agrobacterium vitis (strain S4)).